Reading from the N-terminus, the 262-residue chain is tRNA pseudouridine synthase A (262 aa).

The active-site Nucleophile is aspartate 52. Tyrosine 103 contacts substrate.

The protein belongs to the tRNA pseudouridine synthase TruA family.

The enzyme catalyses uridine(38/39/40) in tRNA = pseudouridine(38/39/40) in tRNA. Functionally, formation of pseudouridine at positions 38, 39 and 40 in the anticodon stem and loop of transfer RNAs. The chain is tRNA pseudouridine synthase A from Methanococcus maripaludis (strain C6 / ATCC BAA-1332).